Consider the following 239-residue polypeptide: Peptidyl-tRNA hydrolase (239 aa).

Y14 is a binding site for tRNA. Catalysis depends on H19, which acts as the Proton acceptor. TRNA contacts are provided by F64, N66, and N112.

This sequence belongs to the PTH family. Monomer.

The protein localises to the cytoplasm. It carries out the reaction an N-acyl-L-alpha-aminoacyl-tRNA + H2O = an N-acyl-L-amino acid + a tRNA + H(+). Functionally, hydrolyzes ribosome-free peptidyl-tRNAs (with 1 or more amino acids incorporated), which drop off the ribosome during protein synthesis, or as a result of ribosome stalling. Catalyzes the release of premature peptidyl moieties from peptidyl-tRNA molecules trapped in stalled 50S ribosomal subunits, and thus maintains levels of free tRNAs and 50S ribosomes. This chain is Peptidyl-tRNA hydrolase, found in Rhizobium meliloti (strain 1021) (Ensifer meliloti).